The chain runs to 210 residues: ATP-dependent Clp protease proteolytic subunit 1 (210 aa).

S106 (nucleophile) is an active-site residue. Residue H131 is part of the active site.

This sequence belongs to the peptidase S14 family. Fourteen ClpP subunits assemble into 2 heptameric rings which stack back to back to give a disk-like structure with a central cavity, resembling the structure of eukaryotic proteasomes.

The protein localises to the cytoplasm. The catalysed reaction is Hydrolysis of proteins to small peptides in the presence of ATP and magnesium. alpha-casein is the usual test substrate. In the absence of ATP, only oligopeptides shorter than five residues are hydrolyzed (such as succinyl-Leu-Tyr-|-NHMec, and Leu-Tyr-Leu-|-Tyr-Trp, in which cleavage of the -Tyr-|-Leu- and -Tyr-|-Trp bonds also occurs).. Functionally, cleaves peptides in various proteins in a process that requires ATP hydrolysis. Has a chymotrypsin-like activity. Plays a major role in the degradation of misfolded proteins. The protein is ATP-dependent Clp protease proteolytic subunit 1 of Chelativorans sp. (strain BNC1).